The following is a 360-amino-acid chain: Peptide chain release factor 1 (360 aa).

Gln235 is subject to N5-methylglutamine.

The protein belongs to the prokaryotic/mitochondrial release factor family. Methylated by PrmC. Methylation increases the termination efficiency of RF1.

It is found in the cytoplasm. In terms of biological role, peptide chain release factor 1 directs the termination of translation in response to the peptide chain termination codons UAG and UAA. In Methylobacillus flagellatus (strain ATCC 51484 / DSM 6875 / VKM B-1610 / KT), this protein is Peptide chain release factor 1.